Reading from the N-terminus, the 234-residue chain is ILYNKDTDVVILPEMWNNGYALEQLEEKADFDLERSTDFIKNLALQYQVDIIAGSVSNKHHDHIFNTAFAIDKTGKVINQYDKMHLVPMLDEPAFLTAGKNVPETFKLSNGVKVTQMICYDLRFPELLRYPARSGATIAFYVAQWPSARLNHWQVLLKARAIENNMYVIGCNGCGYDGKTQYAGHSVAINPNGEIIQELSTTEKELTVTIDIDAVEQQRKAIPVFDSLVPHLYK.

Positions 1 to 212 (ILYNKDTDVV…EKELTVTIDI (212 aa)) constitute a CN hydrolase domain. Residue Glu-14 is the Proton acceptor of the active site. The active-site Proton donor is the Lys-83. Cys-119 serves as the catalytic Nucleophile.

The protein belongs to the carbon-nitrogen hydrolase superfamily. NIT1/NIT2 family.

In Staphylococcus lugdunensis, this protein is Hydrolase in agr operon.